The sequence spans 121 residues: MKWWKLSGQILLLFCFAWTGEWIAKQVHLPIPGSIIGIFLLLISLKFNLVKKEWIQDGADFLLKELILFFIPSAVAVIRYKDTLSQYGIDLIFIIMISTLCVTLVTGILTELLLKRKGSVQ.

The next 3 membrane-spanning stretches (helical) occupy residues 27-47, 58-78, and 89-109; these read VHLPIPGSIIGIFLLLISLKF, GADFLLKELILFFIPSAVAVI, and IDLIFIIMISTLCVTLVTGIL.

Belongs to the CidA/LrgA family. CidA subfamily.

The protein resides in the cell membrane. Its function is as follows. Increases the activity of extracellular murein hydrolases possibly by mediating their export via hole formation. Inhibited by the antiholin-like proteins LrgAB. In an unstressed cell, the LrgAB products probably inhibit the function of the CidA protein. When a cell is stressed by the addition of antibiotics or by other factors in the environment, CidA possibly oligomerizes within the bacterial cell membrane, creating lesions that disrupt the proton motive force, which in turn results in loss of cell viability. These lesions are also hypothesized to regulate the subsequent cell lysis by either allowing the murein hydrolases access to the cell wall substrate and/or regulating their activity by a possible change in the cell wall pH that results from loss of membrane potential. This chain is Holin-like protein CidA, found in Bacillus cytotoxicus (strain DSM 22905 / CIP 110041 / 391-98 / NVH 391-98).